Reading from the N-terminus, the 215-residue chain is Cytochrome b6 (215 aa).

Residues 32–52 traverse the membrane as a helical segment; sequence IFYCLGGITLTCFLVQVATGF. Cys-35 serves as a coordination point for heme c. Heme b is bound by residues His-86 and His-100. 3 consecutive transmembrane segments (helical) span residues 90–110, 116–136, and 186–206; these read ASMMVLMMILHVFRVYLTGGF, LTWVTGVVLAVLTASFGVTGY, and LHTFVLPLLTAVFMLMHFPMI. Heme b is bound by residues His-187 and His-202.

Belongs to the cytochrome b family. PetB subfamily. The 4 large subunits of the cytochrome b6-f complex are cytochrome b6, subunit IV (17 kDa polypeptide, PetD), cytochrome f and the Rieske protein, while the 4 small subunits are PetG, PetL, PetM and PetN. The complex functions as a dimer. Heme b serves as cofactor. Heme c is required as a cofactor.

Its subcellular location is the plastid. It is found in the chloroplast thylakoid membrane. Its function is as follows. Component of the cytochrome b6-f complex, which mediates electron transfer between photosystem II (PSII) and photosystem I (PSI), cyclic electron flow around PSI, and state transitions. In Daucus carota (Wild carrot), this protein is Cytochrome b6.